A 340-amino-acid polypeptide reads, in one-letter code: Phosphate acyltransferase (340 aa).

This sequence belongs to the PlsX family. Homodimer. Probably interacts with PlsY.

The protein resides in the cytoplasm. The enzyme catalyses a fatty acyl-[ACP] + phosphate = an acyl phosphate + holo-[ACP]. It functions in the pathway lipid metabolism; phospholipid metabolism. Functionally, catalyzes the reversible formation of acyl-phosphate (acyl-PO(4)) from acyl-[acyl-carrier-protein] (acyl-ACP). This enzyme utilizes acyl-ACP as fatty acyl donor, but not acyl-CoA. The chain is Phosphate acyltransferase from Clostridioides difficile (strain 630) (Peptoclostridium difficile).